A 264-amino-acid chain; its full sequence is Indole-3-glycerol phosphate synthase (264 aa).

It belongs to the TrpC family.

It carries out the reaction 1-(2-carboxyphenylamino)-1-deoxy-D-ribulose 5-phosphate + H(+) = (1S,2R)-1-C-(indol-3-yl)glycerol 3-phosphate + CO2 + H2O. The protein operates within amino-acid biosynthesis; L-tryptophan biosynthesis; L-tryptophan from chorismate: step 4/5. In Carboxydothermus hydrogenoformans (strain ATCC BAA-161 / DSM 6008 / Z-2901), this protein is Indole-3-glycerol phosphate synthase.